The primary structure comprises 872 residues: MESLLGFLALLLLWGAVAEGPAKKVLTLEGDLVLGGLFPVHQKGGPAEECGPVNEHRGIQRLEAMLFALDRINRDPHLLPGVRLGAHILDSCSKDTHALEQALDFVRASLSRGADGSRHICPDGSYATHSDAPTAVTGVIGGSYSDVSIQVANLLRLFQIPQISYASTSAKLSDKSRYDYFARTVPPDFFQAKAMAEILRFFNWTYVSTVASEGDYGETGIEAFELEARARNICVATSEKVGRAMSRAAFEGVVRALLQKPSARVAVLFTRSEDARELLAATQRLNASFTWVASDGWGALESVVAGSERAAEGAITIELASYPISDFASYFQSLDPWNNSRNPWFREFWEERFHCSFRQRDCAAHSLRAVPFEQESKIMFVVNAVYAMAHALHNMHRALCPNTTHLCDAMRPVNGRRLYKDFVLNVKFDAPFRPADTDDEVRFDRFGDGIGRYNIFTYLRAGSGRYRYQKVGYWAEGLTLDTSFIPWASPSAGPLPASRCSEPCLQNEVKSVQPGEVCCWLCIPCQPYEYRLDEFTCADCGLGYWPNASLTGCFELPQEYIRWGDAWAVGPVTIACLGALATLFVLGVFVRHNATPVVKASGRELCYILLGGVFLCYCMTFVFIAKPSTAVCTLRRLGLGTAFSVCYSALLTKTNRIARIFGGAREGAQRPRFISPASQVAICLALISGQLLIVAAWLVVEAPGTGKETAPERREVVTLRCNHRDASMLGSLAYNVLLIALCTLYAFKTRKCPENFNEAKFIGFTMYTTCIIWLAFLPIFYVTSSDYRVQTTTMCVSVSLSGSVVLGCLFAPKLHIILFQPQKNVVSHRAPTSRFGSAAPRASANLGQGSGSQFVPTVCNGREVVDSTTSSL.

The signal sequence occupies residues 1-18; sequence MESLLGFLALLLLWGAVA. Topologically, residues 19-567 are extracellular; it reads EGPAKKVLTL…QEYIRWGDAW (549 aa). A disulfide bridge connects residues Cys50 and Cys92. Residues Arg57, Arg61, Ser145, Ala166, and Thr168 each coordinate L-glutamate. Residues Asn203 and Asn286 are each glycosylated (N-linked (GlcNAc...) asparagine). 7 disulfide bridges follow: Cys234–Cys518, Cys355–Cys362, Cys400–Cys407, Cys500–Cys519, Cys504–Cys522, Cys525–Cys537, and Cys540–Cys553. Residue Asp295 participates in L-glutamate binding. N-linked (GlcNAc...) asparagine glycosylation occurs at Asn338. Lys377 provides a ligand contact to L-glutamate. A glycan (N-linked (GlcNAc...) asparagine) is linked at Asn402. The N-linked (GlcNAc...) asparagine glycan is linked to Asn547. The chain crosses the membrane as a helical span at residues 568 to 590; that stretch reads AVGPVTIACLGALATLFVLGVFV. Residues 591 to 604 lie on the Cytoplasmic side of the membrane; it reads RHNATPVVKASGRE. A helical transmembrane segment spans residues 605–625; the sequence is LCYILLGGVFLCYCMTFVFIA. Residues 626–636 lie on the Extracellular side of the membrane; sequence KPSTAVCTLRR. Cys632 and Cys721 form a disulfide bridge. Residues 637–655 form a helical membrane-spanning segment; the sequence is LGLGTAFSVCYSALLTKTN. At 656–679 the chain is on the cytoplasmic side; it reads RIARIFGGAREGAQRPRFISPASQ. The interval 677-685 is important for interaction with HTR2A; that stretch reads ASQVAICLA. The chain crosses the membrane as a helical span at residues 680–700; sequence VAICLALISGQLLIVAAWLVV. Residues 701–725 are Extracellular-facing; the sequence is EAPGTGKETAPERREVVTLRCNHRD. Residues 726-747 traverse the membrane as a helical segment; the sequence is ASMLGSLAYNVLLIALCTLYAF. The Cytoplasmic portion of the chain corresponds to 748 to 760; the sequence is KTRKCPENFNEAK. The helical transmembrane segment at 761–783 threads the bilayer; sequence FIGFTMYTTCIIWLAFLPIFYVT. Residues 784-793 are Extracellular-facing; sequence SSDYRVQTTT. The chain crosses the membrane as a helical span at residues 794–819; that stretch reads MCVSVSLSGSVVLGCLFAPKLHIILF. The Cytoplasmic portion of the chain corresponds to 820–872; that stretch reads QPQKNVVSHRAPTSRFGSAAPRASANLGQGSGSQFVPTVCNGREVVDSTTSSL.

It belongs to the G-protein coupled receptor 3 family. As to quaternary structure, forms heterodimers with GRM3 or GRM4. Interacts with GNAI1. Interacts with TAMALIN. Interacts with HTR2A. Is widely distributed in the CNS and prominent expression is seen in Golgi cells of the cerebellum and some particular neuronal cells in other brain regions.

It is found in the cell membrane. It localises to the synapse. Its subcellular location is the cell projection. The protein resides in the dendrite. Functionally, dimeric G protein-coupled receptor which is activated by the excitatory neurotransmitter L-glutamate. Plays critical roles in modulating synaptic transmission and neuronal excitability. Upon activation by glutamate, inhibits presynaptic calcium channels, reducing further glutamate release and dampening excitatory signaling. Mechanistically, ligand binding causes a conformation change that triggers signaling via guanine nucleotide-binding proteins (G proteins) and modulates the activity of down-stream effectors, such as adenylate cyclase. May mediate suppression of neurotransmission or may be involved in synaptogenesis or synaptic stabilization. This chain is Metabotropic glutamate receptor 2 (Grm2), found in Rattus norvegicus (Rat).